Consider the following 372-residue polypeptide: 2-aminoethylphosphonate--pyruvate transaminase 2 (372 aa).

An N6-(pyridoxal phosphate)lysine modification is found at Lys-192.

Belongs to the class-V pyridoxal-phosphate-dependent aminotransferase family. PhnW subfamily. As to quaternary structure, homodimer. The cofactor is pyridoxal 5'-phosphate.

It catalyses the reaction (2-aminoethyl)phosphonate + pyruvate = phosphonoacetaldehyde + L-alanine. Involved in phosphonate degradation. In Polaromonas sp. (strain JS666 / ATCC BAA-500), this protein is 2-aminoethylphosphonate--pyruvate transaminase 2.